The chain runs to 94 residues: PTS system galactitol-specific EIIB component (94 aa).

Residues 1–94 (MKRKIIVACG…QNKILTILQG (94 aa)) enclose the PTS EIIB type-2 domain. Cys9 (phosphocysteine intermediate; for EIIB activity) is an active-site residue. Cys9 is subject to Phosphocysteine; by EIIA.

As to quaternary structure, forms a complex with one each of subunit of GatA, GatB and 2 subunits of GatC.

It is found in the cytoplasm. It catalyses the reaction galactitol(out) + N(pros)-phospho-L-histidyl-[protein] = galactitol 1-phosphate(in) + L-histidyl-[protein]. Its function is as follows. The phosphoenolpyruvate-dependent sugar phosphotransferase system (PTS), a major carbohydrate active transport system, catalyzes the phosphorylation of incoming sugar substrates concomitant with their translocation across the cell membrane. The enzyme II complex composed of GatA, GatB and GatC is involved in galactitol transport. It can also use D-glucitol. The chain is PTS system galactitol-specific EIIB component from Escherichia coli (strain K12).